Consider the following 214-residue polypeptide: Putative pyrophosphatase PpaX (214 aa).

The active-site Nucleophile is D8.

This sequence belongs to the HAD-like hydrolase superfamily. PpaX family. Mg(2+) is required as a cofactor.

The enzyme catalyses diphosphate + H2O = 2 phosphate + H(+). In Clostridium perfringens (strain 13 / Type A), this protein is Putative pyrophosphatase PpaX.